The following is a 145-amino-acid chain: MESYYLWFKSAHLISAICWMAGLLYLPRIYVYHTKAKIGSELDSTLQVMELKLLRFIMNPAMISTFIFGLINAHIYGFVALDTWFQFKMFAVLILVIFHGLLARWRKDFAKGKNVHSKKFYRIVNEIPAICMVIAVIMVIVKPFD.

A run of 4 helical transmembrane segments spans residues 6–26 (LWFK…LLYL), 61–81 (AMIS…FVAL), 83–103 (TWFQ…GLLA), and 123–143 (IVNE…IVKP). H12 is a binding site for heme. Position 88 (K88) interacts with heme.

Belongs to the HemJ family. Homodimer. Requires heme b as cofactor.

Its subcellular location is the cell membrane. It carries out the reaction protoporphyrinogen IX + 3 A = protoporphyrin IX + 3 AH2. The protein operates within porphyrin-containing compound metabolism; protoporphyrin-IX biosynthesis; protoporphyrin-IX from protoporphyrinogen-IX: step 1/1. Catalyzes the oxidation of protoporphyrinogen IX to protoporphyrin IX. Is involved in the biosynthesis of tetrapyrrole molecules like heme. Does not use oxygen or artificial electron acceptors such as menadione or benzoquinone. This Rickettsia prowazekii (strain Madrid E) protein is Protoporphyrinogen IX oxidase.